The primary structure comprises 327 residues: 2-oxoglutarate-dependent dioxygenase traH (327 aa).

Residues 183 to 290 (TTDAAMFLKL…YAVPAFWHGD (108 aa)) form the Fe2OG dioxygenase domain. H211, D213, and H270 together coordinate Fe cation. Residue R280 coordinates 2-oxoglutarate.

It belongs to the iron/ascorbate-dependent oxidoreductase family. It depends on Fe(2+) as a cofactor.

It participates in secondary metabolite biosynthesis. Functionally, 2-oxoglutarate-dependent dioxygenase; part of the tra gene cluster that produces terrestric acid. The clavatol biosynthesis cluster cla and the terrestric acid cluster tra are both involved in the production of peniphenones and penilactones. The non-reducing PKS claF is responsible for the formation of clavatol from successive condensations of 3 malonyl-CoA units, presumably with a simple acetyl-CoA starter unit, and 2 methylation steps. The esterase claE probably collaborates with claF by catalyzing the hydrolysis of ACP-bound acyl intermediates to free the ACP from stalled intermediates. The clavatol oxidase claD then converts clavatol to hydroxyclavatol. Spontaneous dehydration of hydroxyclavatol leads to the accumulation of the highly active ortho-quinone methide. On the other hand, the PKS-NRPS hybrid traA is involved in the formation of crustosic acid, with the help of traB and traD. The polyketide synthase module (PKS) of traA is responsible for the synthesis of the polyketide backbone via the condensation of an acetyl-CoA starter unit with 3 malonyl-CoA units. The downstream nonribosomal peptide synthetase (NRPS) module then amidates the carboxyl end of the polyketide with L-malic acid. Because traA lacks a designated enoylreductase (ER) domain, the required activity is provided the enoyl reductase traG. Crustosic acid undergoes decarboxylation and isomerization to the terrestric acid, catalyzed by the 2-oxoglutarate-dependent dioxygenase traH. Both acids are further converted to the 2 gamma-butyrolactones (R)-5-methyltetronic acid and (S)-5-carboxylmethyltetronic acid, with involvement of the cytochrome P450 monooxygenase claJ. Spontaneous addition of the methide to these gamma-butyrolactones leads to peniphenone D and penilactone D, which undergo again stereospecific attacking by methide to give penilactones A and B. This chain is 2-oxoglutarate-dependent dioxygenase traH, found in Penicillium crustosum (Blue mold fungus).